The primary structure comprises 368 residues: Phenylalanine--tRNA ligase alpha subunit (368 aa).

Residue Glu268 coordinates Mg(2+).

Belongs to the class-II aminoacyl-tRNA synthetase family. Phe-tRNA synthetase alpha subunit type 1 subfamily. Tetramer of two alpha and two beta subunits. The cofactor is Mg(2+).

It is found in the cytoplasm. It catalyses the reaction tRNA(Phe) + L-phenylalanine + ATP = L-phenylalanyl-tRNA(Phe) + AMP + diphosphate + H(+). The polypeptide is Phenylalanine--tRNA ligase alpha subunit (Nitrobacter hamburgensis (strain DSM 10229 / NCIMB 13809 / X14)).